The primary structure comprises 209 residues: Uracil phosphoribosyltransferase (209 aa).

Residues Arg79, Arg104, and 131 to 139 (DPMLATGGS) contribute to the 5-phospho-alpha-D-ribose 1-diphosphate site. Uracil is bound by residues Ile194 and 199-201 (GDA). Asp200 is a 5-phospho-alpha-D-ribose 1-diphosphate binding site.

It belongs to the UPRTase family. Requires Mg(2+) as cofactor.

It catalyses the reaction UMP + diphosphate = 5-phospho-alpha-D-ribose 1-diphosphate + uracil. Its pathway is pyrimidine metabolism; UMP biosynthesis via salvage pathway; UMP from uracil: step 1/1. Its activity is regulated as follows. Allosterically activated by GTP. Functionally, catalyzes the conversion of uracil and 5-phospho-alpha-D-ribose 1-diphosphate (PRPP) to UMP and diphosphate. The chain is Uracil phosphoribosyltransferase from Streptococcus suis (strain 05ZYH33).